The sequence spans 351 residues: Phenylacetaldoxime dehydratase (351 aa).

Belongs to the heme-containing dehydratase family. As to quaternary structure, monomer. It depends on heme b as a cofactor.

The enzyme catalyses (Z)-phenylacetaldehyde oxime = phenylacetonitrile + H2O. Its function is as follows. Catalyzes the stoichiometric dehydration of Z-phenylacetaldoxime to phenylacetonitrile. Prefers the Z-form of phenylacetaldoxime over its E-isomer. This chain is Phenylacetaldoxime dehydratase, found in Bacillus sp. (strain OxB-1).